A 221-amino-acid chain; its full sequence is uncharacterized protein (221 aa).

This is an uncharacterized protein from Treponema pallidum (strain Nichols).